Consider the following 340-residue polypeptide: Glutamine synthetase (340 aa).

The GS beta-grasp domain maps to 3 to 82 (IKAEYIWIDG…LCEVLHTDLT (80 aa)). Residues 88–340 (TRALLRPVAE…CTELARREQI (253 aa)) enclose the GS catalytic domain. Mg(2+)-binding residues include Glu109, Glu111, Glu171, and Glu178. Position 276 (Glu276) interacts with L-glutamate.

It belongs to the glutamine synthetase family. Homooctamer and homotetramer. Mg(2+) serves as cofactor.

The protein resides in the cytoplasm. It catalyses the reaction L-glutamate + NH4(+) + ATP = L-glutamine + ADP + phosphate + H(+). Catalyzes the ATP-dependent biosynthesis of glutamine from glutamate and ammonia. The chain is Glutamine synthetase from Streptomyces hygroscopicus.